Consider the following 548-residue polypeptide: Nonribosomal peptide synthetase 8 (548 aa).

In terms of domain architecture, Carrier spans 1–77; sequence MNSLDQWRDT…QLRGENRSGP (77 aa). Residue Ser-35 is modified to O-(pantetheine 4'-phosphoryl)serine. The tract at residues 122 to 537 is condensation; that stretch reads MAPISSIQEF…FKSLIAELAA (416 aa).

It belongs to the NRP synthetase family.

Its pathway is mycotoxin biosynthesis. In terms of biological role, nonribosomal peptide synthetase; part of the gene cluster that mediates the biosynthesis of fumonisins B1 (FB1), B2 (FB2), B3 (FB3), and B4 (FB4), which are carcinogenic mycotoxins. Within the pathway FUM14 catalyzes esterification of CoA-activated tricarballylic acid to the C-14 and C-15 hydroxyls of the fumonisin backbone. The biosynthesis starts with the FUM1-catalyzed carbon chain assembly from one molecule of acetyl-CoA, eight molecules of malonyl-CoA, and two molecules of methionine (in S-adenosyl form). The C18 polyketide chain is released from the enzyme by a nucleophilic attack of a carbanion, which is derived from R-carbon of alanine by decarboxylation, on the carbonyl carbon of polyketide acyl chain. This step is catalyzed by the pyridoxal 5'-phosphate-dependent aminoacyl transferase FUM8. The resultant 3-keto intermediate is then stereospecifically reduced to a 3-hydroxyl product by reductase FUM13. Subsequent oxidations at C-10 by the cytochrome P450 monooxygenase FUM2, C-14 and C-15 by FUM6, FUM12 or FUM15, tricarballylic esterification of the hydroxyl groups on C-14 and C-15 by acyltransferase FUM14, and C-5 hydroxylation by 2-keto-glutarate-dependent dioxygenase FUM3 furnish the biosynthesis of fumonisins. The tricarballylic moieties are most likely derived from the citric acid cycle, and their addition to the carbon backbone may involve FUM7, FUM10, FUM11 and FUM14. This chain is Nonribosomal peptide synthetase 8, found in Gibberella moniliformis (strain M3125 / FGSC 7600) (Maize ear and stalk rot fungus).